We begin with the raw amino-acid sequence, 300 residues long: Porphobilinogen deaminase (300 aa).

Cys243 carries the post-translational modification S-(dipyrrolylmethanemethyl)cysteine.

The protein belongs to the HMBS family. As to quaternary structure, monomer. Dipyrromethane is required as a cofactor.

It carries out the reaction 4 porphobilinogen + H2O = hydroxymethylbilane + 4 NH4(+). It participates in porphyrin-containing compound metabolism; protoporphyrin-IX biosynthesis; coproporphyrinogen-III from 5-aminolevulinate: step 2/4. Tetrapolymerization of the monopyrrole PBG into the hydroxymethylbilane pre-uroporphyrinogen in several discrete steps. This is Porphobilinogen deaminase from Clostridium novyi (strain NT).